The chain runs to 309 residues: Porphobilinogen deaminase (309 aa).

S-(dipyrrolylmethanemethyl)cysteine is present on C241.

This sequence belongs to the HMBS family. As to quaternary structure, monomer. It depends on dipyrromethane as a cofactor.

The enzyme catalyses 4 porphobilinogen + H2O = hydroxymethylbilane + 4 NH4(+). The protein operates within porphyrin-containing compound metabolism; protoporphyrin-IX biosynthesis; coproporphyrinogen-III from 5-aminolevulinate: step 2/4. Functionally, tetrapolymerization of the monopyrrole PBG into the hydroxymethylbilane pre-uroporphyrinogen in several discrete steps. The sequence is that of Porphobilinogen deaminase from Bacillus cereus (strain ZK / E33L).